A 347-amino-acid chain; its full sequence is 5-formaminoimidazole-4-carboxamide-1-(beta)-D-ribofuranosyl 5'-monophosphate synthetase (347 aa).

5-amino-1-(5-phospho-beta-D-ribosyl)imidazole-4-carboxamide is bound by residues H23 and S91. The region spanning 112-323 (RKILLWESDQ…YSYLYWDEPM (212 aa)) is the ATP-grasp domain. ATP is bound by residues 142–196 (PDEV…VPAY) and E218. N244 contacts 5-amino-1-(5-phospho-beta-D-ribosyl)imidazole-4-carboxamide. Residues E283 and E296 each coordinate Mg(2+).

It belongs to the phosphohexose mutase family. Requires Mg(2+) as cofactor. The cofactor is Mn(2+).

The catalysed reaction is 5-amino-1-(5-phospho-beta-D-ribosyl)imidazole-4-carboxamide + formate + ATP = 5-formamido-1-(5-phospho-D-ribosyl)imidazole-4-carboxamide + ADP + phosphate. The protein operates within purine metabolism; IMP biosynthesis via de novo pathway; 5-formamido-1-(5-phospho-D-ribosyl)imidazole-4-carboxamide from 5-amino-1-(5-phospho-D-ribosyl)imidazole-4-carboxamide (formate route): step 1/1. Functionally, catalyzes the ATP- and formate-dependent formylation of 5-aminoimidazole-4-carboxamide-1-beta-d-ribofuranosyl 5'-monophosphate (AICAR) to 5-formaminoimidazole-4-carboxamide-1-beta-d-ribofuranosyl 5'-monophosphate (FAICAR) in the absence of folates. This chain is 5-formaminoimidazole-4-carboxamide-1-(beta)-D-ribofuranosyl 5'-monophosphate synthetase, found in Ignicoccus hospitalis (strain KIN4/I / DSM 18386 / JCM 14125).